The chain runs to 39 residues: Photosystem II reaction center protein L (39 aa).

The chain crosses the membrane as a helical span at residues 18 to 38 (SLYLGVLSVLVLGILFSSYFF).

Belongs to the PsbL family. As to quaternary structure, PSII is composed of 1 copy each of membrane proteins PsbA, PsbB, PsbC, PsbD, PsbE, PsbF, PsbH, PsbI, PsbJ, PsbK, PsbL, PsbM, PsbT, PsbX, PsbY, Psb30/Ycf12, peripheral proteins PsbO, CyanoQ (PsbQ), PsbU, PsbV and a large number of cofactors. It forms dimeric complexes.

The protein localises to the cellular thylakoid membrane. In terms of biological role, one of the components of the core complex of photosystem II (PSII). PSII is a light-driven water:plastoquinone oxidoreductase that uses light energy to abstract electrons from H(2)O, generating O(2) and a proton gradient subsequently used for ATP formation. It consists of a core antenna complex that captures photons, and an electron transfer chain that converts photonic excitation into a charge separation. This subunit is found at the monomer-monomer interface and is required for correct PSII assembly and/or dimerization. The chain is Photosystem II reaction center protein L from Prochlorococcus marinus (strain MIT 9515).